Here is a 435-residue protein sequence, read N- to C-terminus: C4-dicarboxylate transport protein (435 aa).

Transmembrane regions (helical) follow at residues S4–G24, L44–M64, V76–V96, I142–F162, V184–M204, L222–A242, V289–L309, I326–V346, and I352–I372.

This sequence belongs to the dicarboxylate/amino acid:cation symporter (DAACS) (TC 2.A.23) family.

It localises to the cell inner membrane. Responsible for the transport of dicarboxylates such as succinate, fumarate, and malate from the periplasm across the membrane. This is C4-dicarboxylate transport protein from Salmonella paratyphi A (strain ATCC 9150 / SARB42).